A 545-amino-acid polypeptide reads, in one-letter code: Chaperonin GroEL (545 aa).

Residues 29 to 32 (TMGP), K50, 86 to 90 (DGTTT), G414, 480 to 482 (NAA), and D496 contribute to the ATP site.

The protein belongs to the chaperonin (HSP60) family. Forms a cylinder of 14 subunits composed of two heptameric rings stacked back-to-back. Interacts with the co-chaperonin GroES.

It localises to the cytoplasm. The enzyme catalyses ATP + H2O + a folded polypeptide = ADP + phosphate + an unfolded polypeptide.. In terms of biological role, together with its co-chaperonin GroES, plays an essential role in assisting protein folding. The GroEL-GroES system forms a nano-cage that allows encapsulation of the non-native substrate proteins and provides a physical environment optimized to promote and accelerate protein folding. This Malacoplasma penetrans (strain HF-2) (Mycoplasma penetrans) protein is Chaperonin GroEL.